The chain runs to 800 residues: Isoamylase 2, chloroplastic (800 aa).

The segment covering 1-10 has biased composition (pro residues); sequence MASLPAPPTP. A disordered region spans residues 1–22; sequence MASLPAPPTPLGSCPRGRGGGR. The N-terminal 34 residues, 1 to 34, are a transit peptide targeting the chloroplast; it reads MASLPAPPTPLGSCPRGRGGGRVVARPRRAGLAC.

This sequence belongs to the glycosyl hydrolase 13 family. In terms of assembly, forms a hetero-hexamer composed of five ISA1 and one ISA2. In terms of tissue distribution, highly expressed in developing endosperm and leaves.

It is found in the plastid. The protein resides in the chloroplast. The catalysed reaction is Hydrolysis of (1-&gt;6)-alpha-D-glucosidic branch linkages in glycogen, amylopectin and their beta-limit dextrins.. Starch-debranching enzyme involved in amylopectin biosynthesis in endosperm. Functions by removing excess branches or improper branches that interfere with the formation of double helices of the cluster chains of amylopectin and crystallization of starch. Works together with ISA1 as heterooligomer. The heterooligomer ISA1 and ISA2 possesses higher affinity than the ISA1 homooligomer for various branched polyglucans in vitro, but no marked differences exist in chain preferences for debranching of amylopectin and phytoglycogen between these forms. This is Isoamylase 2, chloroplastic from Oryza sativa subsp. japonica (Rice).